A 166-amino-acid polypeptide reads, in one-letter code: Large ribosomal subunit protein uL10 (166 aa).

This sequence belongs to the universal ribosomal protein uL10 family. Part of the ribosomal stalk of the 50S ribosomal subunit. The N-terminus interacts with L11 and the large rRNA to form the base of the stalk. The C-terminus forms an elongated spine to which L12 dimers bind in a sequential fashion forming a multimeric L10(L12)X complex.

In terms of biological role, forms part of the ribosomal stalk, playing a central role in the interaction of the ribosome with GTP-bound translation factors. This is Large ribosomal subunit protein uL10 from Aeromonas salmonicida (strain A449).